Reading from the N-terminus, the 240-residue chain is Regulatory protein SdiA (240 aa).

The HTH luxR-type domain maps to 173–238; the sequence is VMTPEMNFSK…QVACYAAATG (66 aa). Residues 197 to 216 constitute a DNA-binding region (H-T-H motif); the sequence is SAEIAMILSISENTVNFHQK.

Functionally, activates cell division by specifically increasing transcription from one of the two promoters that lie immediately upstream of the ftsQAZ gene cluster. Activates ydiV expression in response to extracellular autoinducer AI-1 (Vibrio fischeri autoinducer oxoC6). This Escherichia coli (strain K12) protein is Regulatory protein SdiA (sdiA).